The following is a 230-amino-acid chain: Cyclin-U2-2 (230 aa).

It belongs to the cyclin family. Cyclin U/P subfamily. Interacts with CDKA-1. In terms of tissue distribution, expressed in roots and stems. Expressed in the shoot apex, leaf primordia and young leaves.

The polypeptide is Cyclin-U2-2 (CYCU2-2) (Arabidopsis thaliana (Mouse-ear cress)).